The primary structure comprises 181 residues: ATP synthase subunit delta (181 aa).

Belongs to the ATPase delta chain family. As to quaternary structure, F-type ATPases have 2 components, F(1) - the catalytic core - and F(0) - the membrane proton channel. F(1) has five subunits: alpha(3), beta(3), gamma(1), delta(1), epsilon(1). F(0) has three main subunits: a(1), b(2) and c(10-14). The alpha and beta chains form an alternating ring which encloses part of the gamma chain. F(1) is attached to F(0) by a central stalk formed by the gamma and epsilon chains, while a peripheral stalk is formed by the delta and b chains.

The protein resides in the cell inner membrane. In terms of biological role, f(1)F(0) ATP synthase produces ATP from ADP in the presence of a proton or sodium gradient. F-type ATPases consist of two structural domains, F(1) containing the extramembraneous catalytic core and F(0) containing the membrane proton channel, linked together by a central stalk and a peripheral stalk. During catalysis, ATP synthesis in the catalytic domain of F(1) is coupled via a rotary mechanism of the central stalk subunits to proton translocation. Its function is as follows. This protein is part of the stalk that links CF(0) to CF(1). It either transmits conformational changes from CF(0) to CF(1) or is implicated in proton conduction. The protein is ATP synthase subunit delta of Chlorobium limicola (strain DSM 245 / NBRC 103803 / 6330).